The following is a 164-amino-acid chain: CB1 cannabinoid receptor-interacting protein 1 (164 aa).

The protein belongs to the CNRIP family. As to quaternary structure, interacts with the cannabinoid receptor CNR1 (via C-terminus). Does not interact with cannabinoid receptor CNR2.

In terms of biological role, suppresses cannabinoid receptor CNR1-mediated tonic inhibition of voltage-gated calcium channels. This chain is CB1 cannabinoid receptor-interacting protein 1 (CNRIP1), found in Bos taurus (Bovine).